The primary structure comprises 141 residues: Large ribosomal subunit protein uL11 (141 aa).

Belongs to the universal ribosomal protein uL11 family. As to quaternary structure, part of the ribosomal stalk of the 50S ribosomal subunit. Interacts with L10 and the large rRNA to form the base of the stalk. L10 forms an elongated spine to which L12 dimers bind in a sequential fashion forming a multimeric L10(L12)X complex. Post-translationally, one or more lysine residues are methylated.

Functionally, forms part of the ribosomal stalk which helps the ribosome interact with GTP-bound translation factors. This Cyanothece sp. (strain PCC 7425 / ATCC 29141) protein is Large ribosomal subunit protein uL11.